The primary structure comprises 745 residues: Capsid protein (745 aa).

3 disordered regions span residues 23-44 (RRPL…RRTV), 598-619 (PCKT…QVAD), and 660-700 (QPKR…EQAT). Composition is skewed to basic and acidic residues over residues 599–612 (CKTD…DRHP) and 675–691 (GEFR…EERS).

Belongs to the anelloviridae capsid protein family.

Its subcellular location is the virion. In terms of biological role, self assemble to form an icosahedral capsid. In Homo sapiens (Human), this protein is Capsid protein.